The chain runs to 432 residues: Argininosuccinate lyase (432 aa).

It belongs to the lyase 1 family. Argininosuccinate lyase subfamily.

It localises to the cytoplasm. It carries out the reaction 2-(N(omega)-L-arginino)succinate = fumarate + L-arginine. The protein operates within amino-acid biosynthesis; L-arginine biosynthesis; L-arginine from L-ornithine and carbamoyl phosphate: step 3/3. This chain is Argininosuccinate lyase, found in Xanthomonas axonopodis pv. citri (strain 306).